A 438-amino-acid chain; its full sequence is tRNA modification GTPase MnmE (438 aa).

Residues arginine 20, glutamate 76, and lysine 115 each contribute to the (6S)-5-formyl-5,6,7,8-tetrahydrofolate site. The TrmE-type G domain occupies 210 to 370; sequence NFTIMILGRR…LKCFINKIVD (161 aa). Asparagine 220 lines the K(+) pocket. GTP contacts are provided by residues 220–225, 239–245, and 264–267; these read NVGKST, TNIPGTT, and DTAG. Residue serine 224 participates in Mg(2+) binding. K(+)-binding residues include threonine 239, isoleucine 241, and threonine 244. Threonine 245 is a Mg(2+) binding site. Lysine 438 provides a ligand contact to (6S)-5-formyl-5,6,7,8-tetrahydrofolate.

This sequence belongs to the TRAFAC class TrmE-Era-EngA-EngB-Septin-like GTPase superfamily. TrmE GTPase family. In terms of assembly, homodimer. Heterotetramer of two MnmE and two MnmG subunits. The cofactor is K(+).

It localises to the cytoplasm. In terms of biological role, exhibits a very high intrinsic GTPase hydrolysis rate. Involved in the addition of a carboxymethylaminomethyl (cmnm) group at the wobble position (U34) of certain tRNAs, forming tRNA-cmnm(5)s(2)U34. The protein is tRNA modification GTPase MnmE of Carsonella ruddii (strain PV).